We begin with the raw amino-acid sequence, 364 residues long: MITAEKKKKNKFLPNFDKQSIYSLRFDEMQNWLVEQGQQKFRAKQIFEWLYQKRVDSIDEMTNLSKDLRQLLKDNFTVTTLTTVVKQESKDGTIKFLYELQDGYTIETVLMRHDYGNSVCVTTQVGCRIGCTFCASTLGGLKRNLEAGEIVSQVLTVQKALDATEERVSQIVIMGIGEPFENYDEMMDFLRIVNDDNSLNIGARHITVSTSGIIPRIYDFADEDIQINFAVSLHAAKDEVRSRLMPINRAYNVEKLIEAIQYYQEKTNRRVTFEYGLFGGVNDQLEHARELAHLIKGLNCHVNLIPVNHVPERNYVKTAKNDIFKFEKELKRLGINATIRREQGSDIDAACGQLRAKERQVETR.

Glutamate 107 (proton acceptor) is an active-site residue. The Radical SAM core domain maps to 113–346; sequence HDYGNSVCVT…ATIRREQGSD (234 aa). A disulfide bond links cysteine 120 and cysteine 351. 3 residues coordinate [4Fe-4S] cluster: cysteine 127, cysteine 131, and cysteine 134. Residues 177–178, serine 209, 232–234, and asparagine 308 each bind S-adenosyl-L-methionine; these read GE and SLH. Catalysis depends on cysteine 351, which acts as the S-methylcysteine intermediate.

It belongs to the radical SAM superfamily. RlmN family. It depends on [4Fe-4S] cluster as a cofactor.

The protein localises to the cytoplasm. The catalysed reaction is adenosine(2503) in 23S rRNA + 2 reduced [2Fe-2S]-[ferredoxin] + 2 S-adenosyl-L-methionine = 2-methyladenosine(2503) in 23S rRNA + 5'-deoxyadenosine + L-methionine + 2 oxidized [2Fe-2S]-[ferredoxin] + S-adenosyl-L-homocysteine. It catalyses the reaction adenosine(37) in tRNA + 2 reduced [2Fe-2S]-[ferredoxin] + 2 S-adenosyl-L-methionine = 2-methyladenosine(37) in tRNA + 5'-deoxyadenosine + L-methionine + 2 oxidized [2Fe-2S]-[ferredoxin] + S-adenosyl-L-homocysteine. Functionally, specifically methylates position 2 of adenine 2503 in 23S rRNA and position 2 of adenine 37 in tRNAs. Confers resistance to some classes of antibiotics. This chain is Probable dual-specificity RNA methyltransferase RlmN, found in Staphylococcus aureus (strain MW2).